The following is a 634-amino-acid chain: Ankyrin repeat and SOCS box protein 2 (634 aa).

The 20-residue stretch at 26 to 45 folds into the UIM domain; the sequence is SEEELVQMAIEQSLADKTRG. A disordered region spans residues 35–81; it reads IEQSLADKTRGPTPAETSVSSQTNHQPGHIHPWTRSSSPPESPPARA. A compositionally biased stretch (polar residues) spans 49–60; it reads AETSVSSQTNHQ. ANK repeat units follow at residues 104–133, 137–167, 171–200, 204–233, 237–266, 270–299, 303–332, 336–365, 368–397, 410–439, 440–469, and 476–504; these read AAMD…NLAE, EGWL…TIDQ, QEET…EPDI, SRET…DANH, RGWT…KVEA, YSIT…DINT, DSAS…DANK, DGLL…RTRV, SGIS…DVNT, RRTS…DPNR, DVIS…NIDA, and TAFP…DGEP. A Phosphoserine modification is found at Ser-371. The 55-residue stretch at 580–634 folds into the SOCS box domain; sequence EDWAVIKEKAEPPRPLAHLCRLRVRKAIGKYRIKLLDTLPLPGRLIRYLKYENTQ.

The protein belongs to the ankyrin SOCS box (ASB) family. In terms of assembly, component of a probable ECS E3 ubiquitin-protein ligase complex which contains CUL5, either RBX1 or RNF7/RBX2, Elongin BC complex (ELOB and ELOC) and ASB2. Interacts with SKP2. Through its interaction with SKP2, likely to bridge the formation of dimeric E3-ubiquitin-protein ligase complexes composed of an ECS complex and an SCF(SKP2) complex. Interacts with JAK2; the interaction targets JAK2 for Notch-mediated proteasomal degradation. Interacts with TCF3/E2A; the interaction is mediated by SKP2 and targets TCF3 for Notch-mediated proteasomal degradation. Interacts with DES. In terms of processing, monoubiquitinated.

It localises to the cytoplasm. The protein localises to the cytoskeleton. Its subcellular location is the stress fiber. The protein resides in the myofibril. It is found in the sarcomere. It localises to the z line. It participates in protein modification; protein ubiquitination. Functionally, substrate-recognition component of a SCF-like ECS (Elongin-Cullin-SOCS-box protein) E3 ubiquitin-protein ligase complex which mediates the ubiquitination and subsequent proteasomal degradation of target proteins. Mediates Notch-induced ubiquitination and degradation of substrates including E2A and JAK2. Required during embryonic heart development for complete heart looping. Required for cardiomyocyte differentiation. Involved in myogenic differentiation and targets filamin FLNB for proteasomal degradation but not filamin FLNA. Also targets DES for proteasomal degradation. Acts as a negative regulator of skeletal muscle mass. The polypeptide is Ankyrin repeat and SOCS box protein 2 (Rattus norvegicus (Rat)).